A 276-amino-acid polypeptide reads, in one-letter code: Insulin-like growth factor-binding protein 2-A (276 aa).

A signal peptide spans 1–22 (MLSYVSCGLLLALVTFHGTARS). Residues 24–105 (MVFRCPSCTA…VQGLGRCGRK (82 aa)) enclose the IGFBP N-terminal domain. 9 disulfides stabilise this stretch: cysteine 28/cysteine 55, cysteine 31/cysteine 57, cysteine 39/cysteine 58, cysteine 46/cysteine 61, cysteine 69/cysteine 82, cysteine 76/cysteine 102, cysteine 180/cysteine 214, cysteine 225/cysteine 236, and cysteine 238/cysteine 259. The 83-residue stretch at 177–259 (QSQCQQELDQ…SPLIRGDPNC (83 aa)) folds into the Thyroglobulin type-1 domain. A Cell attachment site motif is present at residues 254–256 (RGD).

In terms of assembly, interacts equally well with igf1 and igf2. As to expression, in embryos at 24 hpf, initially expressed in the lens and cranial region, and at 48 and 72 hpf in the brain boundary vasculature. Expression in these regions persists throughout the hatching period and by 96 hpf expression is most abundant in the liver. In both male and female adults, highest expression is in the liver with modest expression in the brain. In male but not females adults, expressed at a low level in muscle and gonad. Also expressed in the adult intestine.

Its subcellular location is the secreted. In terms of biological role, IGF-binding proteins prolong the half-life of the IGFs and have been shown to either inhibit or stimulate the growth promoting effects of the IGFs on cell culture. They alter the interaction of IGFs with their cell surface receptors. The chain is Insulin-like growth factor-binding protein 2-A (igfbp2a) from Danio rerio (Zebrafish).